The sequence spans 301 residues: Ornithine carbamoyltransferase (301 aa).

Residues 53–56, Gln-80, Arg-104, and 131–134 each bind carbamoyl phosphate; these read STRT and HPCQ. L-ornithine contacts are provided by residues Asn-162, Asp-221, and 225-226; that span reads SI. Carbamoyl phosphate-binding positions include 260–261 and Arg-288; that span reads CL.

It belongs to the aspartate/ornithine carbamoyltransferase superfamily. OTCase family.

It is found in the cytoplasm. It carries out the reaction carbamoyl phosphate + L-ornithine = L-citrulline + phosphate + H(+). Its pathway is amino-acid biosynthesis; L-arginine biosynthesis; L-arginine from L-ornithine and carbamoyl phosphate: step 1/3. Functionally, reversibly catalyzes the transfer of the carbamoyl group from carbamoyl phosphate (CP) to the N(epsilon) atom of ornithine (ORN) to produce L-citrulline. This is Ornithine carbamoyltransferase from Cenarchaeum symbiosum (strain A).